Here is a 447-residue protein sequence, read N- to C-terminus: Phosphoglucosamine mutase (447 aa).

The active-site Phosphoserine intermediate is the serine 103. Mg(2+) is bound by residues serine 103, aspartate 242, aspartate 244, and aspartate 246. Serine 103 carries the post-translational modification Phosphoserine.

It belongs to the phosphohexose mutase family. Mg(2+) serves as cofactor. In terms of processing, activated by phosphorylation.

It catalyses the reaction alpha-D-glucosamine 1-phosphate = D-glucosamine 6-phosphate. Catalyzes the conversion of glucosamine-6-phosphate to glucosamine-1-phosphate. The protein is Phosphoglucosamine mutase of Marinobacter nauticus (strain ATCC 700491 / DSM 11845 / VT8) (Marinobacter aquaeolei).